The sequence spans 153 residues: NAD(P)H-quinone oxidoreductase subunit N (153 aa).

The protein belongs to the complex I NdhN subunit family. As to quaternary structure, NDH-1 can be composed of about 15 different subunits; different subcomplexes with different compositions have been identified which probably have different functions.

It localises to the cellular thylakoid membrane. The enzyme catalyses a plastoquinone + NADH + (n+1) H(+)(in) = a plastoquinol + NAD(+) + n H(+)(out). The catalysed reaction is a plastoquinone + NADPH + (n+1) H(+)(in) = a plastoquinol + NADP(+) + n H(+)(out). Its function is as follows. NDH-1 shuttles electrons from an unknown electron donor, via FMN and iron-sulfur (Fe-S) centers, to quinones in the respiratory and/or the photosynthetic chain. The immediate electron acceptor for the enzyme in this species is believed to be plastoquinone. Couples the redox reaction to proton translocation, and thus conserves the redox energy in a proton gradient. Cyanobacterial NDH-1 also plays a role in inorganic carbon-concentration. This chain is NAD(P)H-quinone oxidoreductase subunit N, found in Parasynechococcus marenigrum (strain WH8102).